The following is a 302-amino-acid chain: MVIEQSIYSSSQSTGTAQANLELPLSSPLHLSGRINTKALFSPDNQSQSGGFEFEIGVDEVGRGPLYGSVVVAAAILPKAWSGETEVGLLQDTPLAILTDSKKLTERKREKLFEPVKQHALAYLVVEVPAGVIDEINILQATILGMRVACEQLMVEITKVWRDASELPTAPSTPLGFKLLIDGNKVPDLDEARLATHGICLADMTVTQPAGMVKFCAEAWVKGDARHNAIAAASVLAKVYRDRQLIADGARYPGYGLEGHKGYPTKAHVEAIARLGVLPEHRRSFKPVQQAIEGTLAGTHYS.

In terms of domain architecture, RNase H type-2 spans 53-297; it reads EFEIGVDEVG…VQQAIEGTLA (245 aa). Residues Asp59, Glu60, and Asp163 each coordinate a divalent metal cation.

This sequence belongs to the RNase HII family. It depends on Mn(2+) as a cofactor. Requires Mg(2+) as cofactor.

It localises to the cytoplasm. The catalysed reaction is Endonucleolytic cleavage to 5'-phosphomonoester.. In terms of biological role, endonuclease that specifically degrades the RNA of RNA-DNA hybrids. The chain is Ribonuclease HII from Psychrobacter sp. (strain PRwf-1).